A 191-amino-acid polypeptide reads, in one-letter code: uncharacterized protein (191 aa).

One can recognise an HTH tetR-type domain in the interval 3–63 (IDRKKLILEA…EIFTTLLKEM (61 aa)). Residues 26–45 (TMDLVAKLANVGKGTIYTFF) constitute a DNA-binding region (H-T-H motif).

This is an uncharacterized protein from Bacillus subtilis (strain 168).